The following is a 290-amino-acid chain: MTNKDNTVEDLEQFIAPPAAENLNLEARNLDFYYGTHQTLFNVSLPVERNKITALIGPSGCGKSTLLRILNRIYALYPQQYAVGRVLLDGKDILTDHDTLTRLKERGDNVTLDPLGDDISQIRARIGMVFQKPTPFPMSIYDNVAYGVRLHFNKSRQELDHIVERSLHRAALWDEVKDKLKESGLSLSGGQQQRLCVARGLAVEPEVLLLDEPASALDPVSTARLEETLMELKKDLSIVIVTHNLQQAARISDYTGFMYLGNMIEFCSTDRLFARPKTRRARDYLTGRFG.

An ABC transporter domain is found at 25–285 (LEARNLDFYY…PKTRRARDYL (261 aa)). Residue 57–64 (GPSGCGKS) coordinates ATP.

It belongs to the ABC transporter superfamily. Phosphate importer (TC 3.A.1.7) family. The complex is composed of two ATP-binding proteins (PstB), two transmembrane proteins (PstC and PstA) and a solute-binding protein (PstS).

It localises to the cell inner membrane. The catalysed reaction is phosphate(out) + ATP + H2O = ADP + 2 phosphate(in) + H(+). Part of the ABC transporter complex PstSACB involved in phosphate import. Responsible for energy coupling to the transport system. This chain is Phosphate import ATP-binding protein PstB, found in Zymomonas mobilis subsp. mobilis (strain ATCC 31821 / ZM4 / CP4).